The following is a 257-amino-acid chain: Phosphate import ATP-binding protein PstB (257 aa).

The 249-residue stretch at 4–252 (LKLNDVNIYY…PDNKETEDYI (249 aa)) folds into the ABC transporter domain. Residue 36 to 43 (GPSGCGKS) coordinates ATP.

The protein belongs to the ABC transporter superfamily. Phosphate importer (TC 3.A.1.7) family. As to quaternary structure, the complex is composed of two ATP-binding proteins (PstB), two transmembrane proteins (PstC and PstA) and a solute-binding protein (PstS).

It localises to the cell membrane. It carries out the reaction phosphate(out) + ATP + H2O = ADP + 2 phosphate(in) + H(+). Its function is as follows. Part of the ABC transporter complex PstSACB involved in phosphate import. Responsible for energy coupling to the transport system. In Corynebacterium efficiens (strain DSM 44549 / YS-314 / AJ 12310 / JCM 11189 / NBRC 100395), this protein is Phosphate import ATP-binding protein PstB.